Here is a 1533-residue protein sequence, read N- to C-terminus: MEVSPLQPVNENMQVNKTKKNEEAKKRLSIERIYQKKTQLEHILLRPDTYIGSVESVTQQMWVYDEDIGINYREVTFVPGLYKIFDEILVNAADNKQRDPKMSCIRVTIDPENNLISIWNNGKGIPVVEHKVEKMYVPALIFGQLLTSSNYDDEEKKVTGGRNGYGAKLCNIFSTKFTVETASREYKKMFKQTWMDNMGRAGEMELKPFNGEDYTCITFHPDLSKFKMQSLDKDIVALMVRRAYDIAGSTKDVKVFLNGNKLPVKGFRSYVDLYLKDKVDETGNPLKIIHEQVNHRWEVCLTMSEKGFQQISFVNSIATSKGGRHVDYVADQIVAKLVDVVKKKNKGGVAVKAHQVKNHMWIFVNALIENPTFDSQTKENMTLQVKSFGSTCQLSEKFIKAAIGCGIVESILNWVKFKAQVQLNKKCSAVKHNRIKGIPKLDDANDAGGRNSTECTLILTEGDSAKTLAVSGLGVVGRDKYGVFPLRGKILNVREASHKQIMENAEINNIIKIVGLQYKKNYEDEDSLKTLRYGKIMIMTDQDQDGSHIKGLLINFIHHNWPSLLRHRFLEEFITPIVKVSKNKQEMAFYSLPEFEEWKSSTPNHKKWKVKYYKGLGTSTSKEAKEYFADMKRHRIQFKYSGPEDDAAISLAFSKKQIDDRKEWLTHFMEDRRQRKLLGLPEDYLYGQTTTYLTYNDFINKELILFSNSDNERSIPSMVDGLKPGQRKVLFTCFKRNDKREVKVAQLAGSVAEMSSYHHGEMSLMMTIINLAQNFVGSNNLNLLQPIGQFGTRLHGGKDSASPRYIFTMLSPLARLLFPPKDDHTLKFLYDDNQRVEPEWYIPIIPMVLINGAEGIGTGWSCKIPNFDVREVVNNIRLLMDGEEPLPMLPSYKNFKGTIEELAPNQYVISGEVAILNSTTIEISELPIRTWTQTYKEQVLEPMLNGTEKTPPLITDYREYHTDTTVKFVVKMTEEKLAEAERVGLHKVFKLQTSLTCNSMVLFDHVGCLKKYDTVLDILRDFFELRLKYYGLRKEWLLGMLGAESAKLNNQARFILEKIDGKIIIENKPKKELIKVLIQRGYDSDPVKAWKEAQQKVPDEEENEESDNEKEADKSDSVADSGPTFNYLLDMPLWYLTKEKKDELCKLRNEKEQELETLKRKSPSDLWKEDLAAFIEELEAVEAKEKQDEQIGLPGKGGKAKGKKTQMAEVLPSPCGKRVIPRVTVEMKAEAEKKIKKKIKSENTEGSPQEDGMEVEGLKQRLEKKQKREPGTKTKKQTTLPFKPIKKAKKRNPWSDSESDISSDESNFNVPPREKEPRRAAAKTKFTVDLDSDEDFSDADEKTRDEDFVPSDTSPQKAETSPKHTNKEPKPQKSTPSVSDFDADDAKDNVPPSPSSPVADFPAVTETIKPVSKKNVTVKKTAAKSQSSTSTTGAKKRAAPKGAKKDPDLDSDVSKKPNPPKPKGRRKRKPSTSDDSDSNFEKMISKAVTSKKPKGESDDFHLDLDLAVASRAKSGRTKKPIKYLEESDEDDLF.

Residue M1 is modified to N-acetylmethionine. Positions 1–22 are disordered; the sequence is MEVSPLQPVNENMQVNKTKKNE. S4 carries the post-translational modification Phosphoserine. The span at 7–16 shows a compositional bias: polar residues; it reads QPVNENMQVN. Residue K17 forms a Glycyl lysine isopeptide (Lys-Gly) (interchain with G-Cter in SUMO2) linkage. Residues N91, N120, and 148–150 each bind ATP; that span reads SSN. Residues K156 and K157 each participate in a glycyl lysine isopeptide (Lys-Gly) (interchain with G-Cter in SUMO2) cross-link. An ATP-binding site is contributed by 161–168; it reads GRNGYGAK. A Glycyl lysine isopeptide (Lys-Gly) (interchain with G-Cter in SUMO2) cross-link involves residue K261. Position 282 is a phosphothreonine (T282). The interaction with DNA stretch occupies residues 342–344; that stretch reads KKK. A Glycyl lysine isopeptide (Lys-Gly) (interchain with G-Cter in SUMO2) cross-link involves residue K352. ATP is bound at residue 376 to 378; sequence QTK. Residues K386, K397, K416, K418, K425, and K440 each participate in a glycyl lysine isopeptide (Lys-Gly) (interchain with G-Cter in SUMO2) cross-link. Residues 455 to 572 enclose the Toprim domain; sequence CTLILTEGDS…SLLRHRFLEE (118 aa). E461 contributes to the Mg(2+) binding site. Residues K466, K480, and K529 each participate in a glycyl lysine isopeptide (Lys-Gly) (interchain with G-Cter in SUMO2) cross-link. Mg(2+) contacts are provided by D541 and D543. Glycyl lysine isopeptide (Lys-Gly) (interchain with G-Cter in SUMO2) cross-links involve residues K584, K599, K614, K622, K625, K632, K639, K655, K662, and K676. The Topo IIA-type catalytic domain maps to 715–1171; that stretch reads IPSMVDGLKP…SPSDLWKEDL (457 aa). Residue Y805 is the O-(5'-phospho-DNA)-tyrosine intermediate of the active site. Residues 990–999 are interaction with DNA; sequence KLQTSLTCNS. K1075 participates in a covalent cross-link: Glycyl lysine isopeptide (Lys-Gly) (interchain with G-Cter in SUMO2). 2 disordered regions span residues 1090 to 1121 and 1183 to 1215; these read WKEA…VADS and AKEK…PSPC. The segment covering 1099–1108 has biased composition (acidic residues); that stretch reads DEEENEESDN. Residue S1106 is modified to Phosphoserine; by CK1. Residues K1114, K1196, and K1204 each participate in a glycyl lysine isopeptide (Lys-Gly) (interchain with G-Cter in SUMO2) cross-link. Position 1205 is a phosphothreonine (T1205). S1213 carries the post-translational modification Phosphoserine. Residue K1228 forms a Glycyl lysine isopeptide (Lys-Gly) (interchain with G-Cter in SUMO2) linkage. Positions 1231–1533 are disordered; sequence AEKKIKKKIK…LEESDEDDLF (303 aa). Residue K1240 forms a Glycyl lysine isopeptide (Lys-Gly) (interchain with G-Cter in SUMO1); alternate linkage. A Glycyl lysine isopeptide (Lys-Gly) (interchain with G-Cter in SUMO2); alternate cross-link involves residue K1240. T1244 carries the post-translational modification Phosphothreonine. Position 1247 is a phosphoserine (S1247). Over residues 1256-1272 the composition is skewed to basic and acidic residues; sequence EGLKQRLEKKQKREPGT. Glycyl lysine isopeptide (Lys-Gly) (interchain with G-Cter in SUMO2) cross-links involve residues K1259, K1276, K1283, and K1286. S1295, S1297, S1299, and S1302 each carry phosphoserine. A Phosphothreonine modification is found at T1327. A phosphoserine mark is found at S1332 and S1337. T1343 carries the post-translational modification Phosphothreonine. A phosphoserine mark is found at S1351 and S1354. The segment covering 1360-1371 has biased composition (basic and acidic residues); sequence TSPKHTNKEPKP. Glycyl lysine isopeptide (Lys-Gly) (interchain with G-Cter in SUMO2) cross-links involve residues K1363, K1367, and K1373. A phosphoserine mark is found at S1374 and S1377. K1387 is covalently cross-linked (Glycyl lysine isopeptide (Lys-Gly) (interchain with G-Cter in SUMO2)). 2 positions are modified to phosphoserine: S1393 and S1395. A compositionally biased stretch (low complexity) spans 1409–1433; the sequence is KPVSKKNVTVKKTAAKSQSSTSTTG. K1424 is covalently cross-linked (Glycyl lysine isopeptide (Lys-Gly) (interchain with G-Cter in SUMO2); alternate). K1424 is subject to N6-acetyllysine; alternate. Residues 1435–1441 are interaction with PLSCR1; the sequence is KKRAAPK. Basic and acidic residues predominate over residues 1443-1455; that stretch reads AKKDPDLDSDVSK. K1444 participates in a covalent cross-link: Glycyl lysine isopeptide (Lys-Gly) (interchain with G-Cter in SUMO2); alternate. An N6-acetyllysine; alternate modification is found at K1444. S1451 is modified (phosphoserine). Residues K1456 and K1461 each participate in a glycyl lysine isopeptide (Lys-Gly) (interchain with G-Cter in SUMO2) cross-link. A Phosphoserine modification is found at S1471. T1472 carries the post-translational modification Phosphothreonine. Residues S1473, S1476, and S1478 each carry the phosphoserine modification. Residues K1486 and K1494 each participate in a glycyl lysine isopeptide (Lys-Gly) (interchain with G-Cter in SUMO2) cross-link. A compositionally biased stretch (basic and acidic residues) spans 1493–1504; the sequence is PKGESDDFHLDL. 2 positions are modified to phosphoserine: S1497 and S1527.

It belongs to the type II topoisomerase family. In terms of assembly, homodimer. Interacts with COPS5. Interacts with RECQL5; this stimulates DNA decatenation. Interacts with SETMAR; stimulates the topoisomerase activity. Interacts with DHX9; this interaction occurs in a E2 enzyme UBE2I- and RNA-dependent manner, negatively regulates DHX9-mediated double-stranded DNA and RNA duplex helicase activity and stimulates TOP2A-mediated supercoiled DNA relaxation activity. Interacts with HNRNPU (via C-terminus); this interaction protects the topoisomerase TOP2A from degradation and positively regulates the relaxation of supercoiled DNA in a RNA-dependent manner. Interacts with MCM3AP. Interacts with ERCC6. Interacts with PLSCR1. Interacts with GCNA; this interaction allows the resolution of topoisomerase II (TOP2A) DNA-protein cross-links. Interacts with POL1RA/RPA1 (via dock II) and UBTF in the context of Pol I complex; may assist Pol I transcription initiation by releasing supercoils occurring during DNA unwinding. Interacts with TPRN; TPRN interacts with a number of DNA damage response proteins, is recruited to sites of DNA damage and may play a role in DNA damage repair. Mg(2+) serves as cofactor. Requires Mn(2+) as cofactor. The cofactor is Ca(2+). In terms of processing, phosphorylation has no effect on catalytic activity. However, phosphorylation at Ser-1106 by CSNK1D/CK1 promotes DNA cleavable complex formation.

It localises to the cytoplasm. Its subcellular location is the nucleus. It is found in the nucleoplasm. The protein localises to the nucleolus. It carries out the reaction ATP-dependent breakage, passage and rejoining of double-stranded DNA.. Functionally, key decatenating enzyme that alters DNA topology by binding to two double-stranded DNA molecules, generating a double-stranded break in one of the strands, passing the intact strand through the broken strand, and religating the broken strand. May play a role in regulating the period length of BMAL1 transcriptional oscillation. This chain is DNA topoisomerase 2-alpha (TOP2A), found in Sus scrofa (Pig).